We begin with the raw amino-acid sequence, 109 residues long: Keratin, type II microfibrillar (109 aa).

Positions 1–10 (QNRQCCESNL) are linker 1. Positions 1–109 (QNRQCCESNL…RLYEEEIRVL (109 aa)) constitute an IF rod domain. Positions 11 to 109 (EPLFSGYIET…RLYEEEIRVL (99 aa)) are coil 1B.

Belongs to the intermediate filament family.

In terms of biological role, wool microfibrillar keratin. This chain is Keratin, type II microfibrillar, found in Ovis aries (Sheep).